A 259-amino-acid chain; its full sequence is HTH-type transcriptional regulator Rv1719 (259 aa).

Residues Ile-13 to Pro-75 form the HTH iclR-type domain. The H-T-H motif DNA-binding region spans Gln-35 to Asn-54. Residues Val-88–Lys-259 form the IclR-ED domain.

In terms of assembly, homodimer.

Binds to the upstream region of Rv1714 and probably modulates the expression of the downstream gene(s). This Mycobacterium tuberculosis (strain ATCC 25618 / H37Rv) protein is HTH-type transcriptional regulator Rv1719.